Here is a 297-residue protein sequence, read N- to C-terminus: UPF0761 membrane protein VC0395_A2314/VC395_2854 (297 aa).

6 consecutive transmembrane segments (helical) span residues 43–63 (LLSM…FALF), 100–120 (MTAV…SNID), 135–155 (AVFS…LVGA), 181–201 (FLRW…YLLV), 213–233 (LGAL…AAYI), and 245–265 (ALAA…IVLV).

This sequence belongs to the UPF0761 family.

The protein localises to the cell inner membrane. This Vibrio cholerae serotype O1 (strain ATCC 39541 / Classical Ogawa 395 / O395) protein is UPF0761 membrane protein VC0395_A2314/VC395_2854.